The following is a 387-amino-acid chain: MLHTTPSGLLIIDKPQGVTSFDAVAAVRGALHIKKVGHAGTLDPMATGTLVIAFGHATRLLNAIVAHDKTYEATIRLGLRTTTDDAEGEVLVDDEARSRWQTLSAQLTEGGQSGEPTALPTASWQDLLTRTIATNFTGDIEQVPNTFSAIKINGQRAYDLAREGKEVELKPRPVTISEFTVLNIRSGFVAGEQAAEPLREDANTGAIPALDVDVRVSCSSGTYIRALARDLGNELGVGGYLTRLRRTRVGRFALPDDASGLIAPEAMLDTRTHTVTAHTDQKTFTNREGQTVTRNKCVLDTPEGLAGDERRNWLLDHALTMEQAARGAMPALDITPEEASELRFGRRIERTISEPTAAIVPQTHDVAAIIERANAHQAKPVTVFPLA.

The active-site Nucleophile is Asp43.

It belongs to the pseudouridine synthase TruB family. Type 1 subfamily.

It catalyses the reaction uridine(55) in tRNA = pseudouridine(55) in tRNA. In terms of biological role, responsible for synthesis of pseudouridine from uracil-55 in the psi GC loop of transfer RNAs. The chain is tRNA pseudouridine synthase B from Bifidobacterium longum subsp. infantis (strain ATCC 15697 / DSM 20088 / JCM 1222 / NCTC 11817 / S12).